The chain runs to 244 residues: Globin-like protein 9 (244 aa).

The disordered stretch occupies residues Met-1–Arg-38. Positions Ser-47–Glu-200 constitute a Globin domain. Residues His-111 and His-143 each coordinate heme.

Belongs to the globin family.

This is Globin-like protein 9 from Caenorhabditis briggsae.